We begin with the raw amino-acid sequence, 460 residues long: Tyrosine phenol-lyase (460 aa).

Lys-260 bears the N6-(pyridoxal phosphate)lysine mark.

This sequence belongs to the beta-eliminating lyase family. In terms of assembly, homotetramer. Requires pyridoxal 5'-phosphate as cofactor.

The enzyme catalyses L-tyrosine + H2O = phenol + pyruvate + NH4(+). In Fusobacterium nucleatum subsp. nucleatum (strain ATCC 25586 / DSM 15643 / BCRC 10681 / CIP 101130 / JCM 8532 / KCTC 2640 / LMG 13131 / VPI 4355), this protein is Tyrosine phenol-lyase.